Reading from the N-terminus, the 459-residue chain is Argininosuccinate lyase (459 aa).

The protein belongs to the lyase 1 family. Argininosuccinate lyase subfamily.

It localises to the cytoplasm. It carries out the reaction 2-(N(omega)-L-arginino)succinate = fumarate + L-arginine. Its pathway is amino-acid biosynthesis; L-arginine biosynthesis; L-arginine from L-ornithine and carbamoyl phosphate: step 3/3. The chain is Argininosuccinate lyase from Prochlorococcus marinus (strain MIT 9215).